Consider the following 208-residue polypeptide: Probable molybdenum cofactor guanylyltransferase (208 aa).

Residues 12–14, Lys-24, Asp-72, and Asp-101 each bind GTP; that span reads IAG. Mg(2+) is bound at residue Asp-101.

It belongs to the MobA family. It depends on Mg(2+) as a cofactor.

The protein localises to the cytoplasm. It carries out the reaction Mo-molybdopterin + GTP + H(+) = Mo-molybdopterin guanine dinucleotide + diphosphate. In terms of biological role, transfers a GMP moiety from GTP to Mo-molybdopterin (Mo-MPT) cofactor (Moco or molybdenum cofactor) to form Mo-molybdopterin guanine dinucleotide (Mo-MGD) cofactor. The sequence is that of Probable molybdenum cofactor guanylyltransferase from Chloroflexus aggregans (strain MD-66 / DSM 9485).